Reading from the N-terminus, the 297-residue chain is Internalin C (297 aa).

The first 34 residues, 1–34 (MLKKNNWLQNAVIAMLVLIVGLCINMGSGTKVQA), serve as a signal peptide directing secretion. LRR repeat units follow at residues 74–96 (LSGVQNFNGDNSNIQSLAGMQFF), 97–120 (TNLKELHLSHNQISDLSPLKDLTK), 122–139 (EELSVNRNRLKNLNGIPS), 140–161 (ACLSRLFLDNNELRDTDSLIHL), 162–184 (KNLEILSIRNNKLKSIVMLGFLS), and 186–207 (LEVLDLHGNEITNTGGLTRLKK).

This sequence belongs to the internalin family. As to quaternary structure, interacts in vitro with human intestinal mucin-2 (MUC2) but not with mucin-1; binding is slightly better at pH 5.5, (the pH of the intestine) than at pH 7.4. Interacts with the SH3 6 domain of human DNMBP (Tuba). Interacts with I-kappa-B kinase alpha (IKKA, CHUK).

Its subcellular location is the secreted. The protein localises to the host cytoplasm. Functionally, a virulence enhancer that has at least 2 dissociable functions in infection; it impairs translocation of host transcription factor NF-kappa-B to the nucleus and antagonizes the function of the Tuba dynamin-binding protein, promoting bacterial spreading. Perturbs the morphology of host cell junctions by impairing host DNMBP (Tuba) and WASL interaction, altering cortical tension at the cell junctions and allowing bacteria to more efficiently form bacteria-filled cell protrusions which promote bacterial spreading within infected host tissue. Down-regulates the host inflammation response usually induced by Listeria infection. Interacts with host I-kappa-B kinase alpha (IKKA, CHUK), which prevents IKKA from phosphorylating NF-kappa-B inhibitor alpha (IKBA, NFKBIA) and thus delays degradation of phospho-IKBA. Translocation of host transcription factor p65 (a subunit of NF-kappa-B, RELA) into the nucleus is impaired, which prevents activation of NF-KB-regulated genes. Recognized by serum from healthy humans exposed to L.monocytogenes as well from patients who have recovered from listeriosis. The protein is Internalin C of Listeria monocytogenes serotype 1/2a (strain EGD / Mackaness).